Consider the following 417-residue polypeptide: Guanine nucleotide-exchange factor SEC12 (417 aa).

At 1–388 the chain is on the cytoplasmic side; that stretch reads MGRRRGVELY…QLHLLPSRRS (388 aa). 3'-nitrotyrosine is present on Tyr10. The interval 101 to 135 is disordered; the sequence is KGSKAEKSGSKEQGPRQRKGAAPAEKKSGAEVHPE. Composition is skewed to basic and acidic residues over residues 103-115 and 124-135; these read SKAE…EQGP and AEKKSGAEVHPE. WD repeat units lie at residues 152–191, 194–232, and 298–337; these read STEP…KVLE, AHEG…TQLQ, and CGHE…RLYY. Residues 389-409 traverse the membrane as a helical segment; sequence VPVWLLLLLCVGLIIVTILLL. The Lumenal segment spans residues 410-417; sequence QSAFPGFL.

In terms of assembly, interacts with SAR1B (GDP-bound form). Interacts with MIA2; recruits PREB to endoplasmic reticulum exit sites. Interacts with CIDEB; facilitating loading of SCAP-SREBP into COPII vesicles.

The protein resides in the endoplasmic reticulum membrane. It is found in the nucleus. Functionally, guanine nucleotide exchange factor (GEF) that regulates the assembly of the coat protein complex II/COPII in endoplasmic reticulum (ER) to Golgi vesicle-mediated transport. Selectively activates SAR1A and SAR1B by promoting the exchange of guanosine diphosphate (GDP) for guanosine triphosphate (GTP) in these small GTPases. In their activated GTP-bound state, SAR1A and SAR1B insert into the membrane of the endoplasmic reticulum where they recruit the remainder of the coat protein complex II/COPII which is responsible for both the sorting of proteins and the deformation and budding of membranes into vesicles destined to the Golgi. Its function is as follows. Was first identified based on its probable role in the regulation of pituitary gene transcription. Binds to the prolactin gene (PRL) promoter and seems to activate transcription. In Rattus norvegicus (Rat), this protein is Guanine nucleotide-exchange factor SEC12.